The sequence spans 101 residues: Small ribosomal subunit protein uS14 (101 aa).

Belongs to the universal ribosomal protein uS14 family. Part of the 30S ribosomal subunit. Contacts proteins S3 and S10.

Binds 16S rRNA, required for the assembly of 30S particles and may also be responsible for determining the conformation of the 16S rRNA at the A site. The chain is Small ribosomal subunit protein uS14 from Shewanella piezotolerans (strain WP3 / JCM 13877).